The primary structure comprises 162 residues: Selenoprotein F (162 aa).

The signal sequence occupies residues 1–28; it reads MAAGQGGWLRPALGLRLLLATAFQAVSA. A non-standard amino acid (selenocysteine) is located at residue Sec-93.

Belongs to the selenoprotein M/F family. Forms a tight complex with UGGT1/UGCGL1. Interacts with UGGT2/UGCGL2. Interacts with RDH11. In terms of tissue distribution, highest levels in prostate, lower levels in brain, lung, thyroid gland, and large intestine.

Its subcellular location is the endoplasmic reticulum lumen. May be involved in redox reactions associated with the formation of disulfide bonds. May contribute to the quality control of protein folding in the endoplasmic reticulum. May regulate protein folding by enhancing the catalytic activity of UGGT1/UGCGL1 and UGGT2/UGCGL2. The protein is Selenoprotein F of Rattus norvegicus (Rat).